The following is a 419-amino-acid chain: MVSESHHEALAAPPVTTVATVLPSNATEPASPGEGKEDAFSKLKEKFMNELHKIPLPPWALIAIAIVAVLLVLTCCFCICKKCLFKKKNKKKGKEKGGKNAINMKDVKDLGKTMKDQDDDAETGLTDGEEKEEPKEEEKLGKLQYSLDYDFQNNQLLVGIIQAAELPALDMGGTSDPYVKVFLLPDKKKKFETKVHRKTLNPVFNEQFTFKVPYSELGGKTLVMAVYDFDRFSKHDIIGEFKVPMNTVDFGHVTEEWRDLQSAEKEEQEKLGDICFSLRYVPTAGKLTVVILEAKNLKKMDVGGLSDPYVKIHLMQNGKRLKKKETTIKKNTLNPYYNESFSFEVPFEQIQKVQVVVTVLDYDKIGKNDAIGKVFVGYNSTGAELRHWSDMLANPRRPIAQWHTLQVEEEVDAMLAVKK.

Topologically, residues 1–58 (MVSESHHEALAAPPVTTVATVLPSNATEPASPGEGKEDAFSKLKEKFMNELHKIPLPP) are vesicular. N-linked (GlcNAc...) asparagine glycosylation is present at Asn25. A helical transmembrane segment spans residues 59–80 (WALIAIAIVAVLLVLTCCFCIC). S-palmitoyl cysteine attachment occurs at residues Cys75, Cys76, Cys78, Cys80, and Cys83. Residues 81–419 (KKCLFKKKNK…EVDAMLAVKK (339 aa)) are Cytoplasmic-facing. Residues 108-139 (KDLGKTMKDQDDDAETGLTDGEEKEEPKEEEK) form a disordered region. Residues 117–131 (QDDDAETGLTDGEEK) show a composition bias toward acidic residues. The residue at position 126 (Thr126) is a Phosphothreonine. The tract at residues 133 to 379 (EPKEEEKLGK…AIGKVFVGYN (247 aa)) is phospholipid binding. Positions 139-258 (KLGKLQYSLD…DFGHVTEEWR (120 aa)) constitute a C2 1 domain. Residues Leu169, Asp170, and Asp176 each coordinate Ca(2+). Tyr227 is subject to Phosphotyrosine. Residues Asp228, Phe229, Asp230, Ser233, Lys234, and Asp236 each coordinate Ca(2+). Ser262 carries the phosphoserine modification. Residues 270–403 (KLGDICFSLR…NPRRPIAQWH (134 aa)) enclose the C2 2 domain. Residues Asp301 and Asp307 each contribute to the Ca(2+) site. A phosphoserine mark is found at Ser340 and Ser342. Ca(2+)-binding residues include Asp361, Asp363, and Asp369.

Belongs to the synaptotagmin family. Homotetramer. Heterodimer; heterodimerizes with SYT2 in presence of calcium. Interacts with SCAMP5. Interacts with STON2. Forms a complex with SV2B, syntaxin 1 and SNAP25. Interacts with SV2A, SV2B and SV2C. Interacts with RIMS1. Interacts with PRRT2. Interacts with DNAJC5 in a phosphorylation-dependent manner. Interacts (via N-terminus) with RAB3A. Interacts with SYT12. Interacts with calmodulin. Interacts with DNM1 (via C-terminal proline-rich domain (PRD)); this interaction facilitates vesicle fission during clathrin-mediated endocytosis (CME). Requires Ca(2+) as cofactor. In terms of processing, glycosylated.

The protein resides in the cytoplasmic vesicle. Its subcellular location is the secretory vesicle membrane. The protein localises to the secretory vesicle. It localises to the synaptic vesicle membrane. It is found in the chromaffin granule membrane. The protein resides in the cytoplasm. Calcium sensor that participates in triggering neurotransmitter release at the synapse. May have a regulatory role in the membrane interactions during trafficking of synaptic vesicles at the active zone of the synapse. It binds acidic phospholipids with a specificity that requires the presence of both an acidic head group and a diacyl backbone. A Ca(2+)-dependent interaction between synaptotagmin and putative receptors for activated protein kinase C has also been reported. It can bind to at least three additional proteins in a Ca(2+)-independent manner; these are neurexins, syntaxin and AP2. Plays a role in dendrite formation by melanocytes. The chain is Synaptotagmin-1 from Pongo abelii (Sumatran orangutan).